Reading from the N-terminus, the 409-residue chain is Microfibrillar-associated protein 3-like (409 aa).

An N-terminal signal peptide occupies residues Met-1–Ala-28. The Extracellular segment spans residues Lys-29–Asp-148. N-linked (GlcNAc...) asparagine glycans are attached at residues Asn-33, Asn-37, Asn-67, Asn-111, and Asn-135. The region spanning Pro-47–Arg-141 is the Ig-like C2-type domain. Cys-68 and Cys-125 are disulfide-bonded. The chain crosses the membrane as a helical span at residues Met-149–Ile-169. The Cytoplasmic portion of the chain corresponds to Thr-170–Val-409. Tyr-287 is modified (phosphotyrosine). Phosphoserine is present on residues Ser-298, Ser-303, Ser-306, and Ser-307. The disordered stretch occupies residues Val-319–Val-395. The span at Ser-325–Val-340 shows a compositional bias: basic and acidic residues. Positions Thr-356–Thr-373 are enriched in low complexity.

The protein resides in the cell membrane. The protein localises to the nucleus. It is found in the cytoplasm. In terms of biological role, may participate in the nuclear signaling of EGFR and MAPK1/ERK2. This is Microfibrillar-associated protein 3-like (Mfap3l) from Mus musculus (Mouse).